We begin with the raw amino-acid sequence, 159 residues long: Ribosomal RNA large subunit methyltransferase H (159 aa).

Residues leucine 76, glycine 108, and 127-132 (FGLLTL) each bind S-adenosyl-L-methionine.

Belongs to the RNA methyltransferase RlmH family. Homodimer.

It localises to the cytoplasm. The catalysed reaction is pseudouridine(1915) in 23S rRNA + S-adenosyl-L-methionine = N(3)-methylpseudouridine(1915) in 23S rRNA + S-adenosyl-L-homocysteine + H(+). In terms of biological role, specifically methylates the pseudouridine at position 1915 (m3Psi1915) in 23S rRNA. The sequence is that of Ribosomal RNA large subunit methyltransferase H from Streptococcus pyogenes serotype M5 (strain Manfredo).